A 683-amino-acid chain; its full sequence is Actin-binding LIM protein 3 (683 aa).

At Met-1 the chain carries N-acetylmethionine. LIM zinc-binding domains are found at residues 21 to 80 (IQCY…LYGT), 80 to 140 (TRCD…MASS), 149 to 208 (SHCA…QFGI), and 208 to 268 (IKCE…ARAE). Residues Ser-277, Ser-280, Ser-282, Ser-286, Ser-290, Ser-337, Ser-372, and Ser-373 each carry the phosphoserine modification. The interval 372 to 472 (SSPGYIDSPT…EDISQTSKYS (101 aa)) is disordered. Tyr-376 bears the Phosphotyrosine mark. Residues Ser-379 and Ser-388 each carry the phosphoserine modification. Composition is skewed to polar residues over residues 380-393 (PTYS…TFSR), 406-426 (GRSS…TSYQ), and 454-471 (STAT…TSKY). Residues Ser-493, Ser-503, and Ser-504 each carry the phosphoserine modification. Thr-543 carries the post-translational modification Phosphothreonine. 3 positions are modified to phosphoserine: Ser-567, Ser-576, and Ser-607. An HP domain is found at 615–683 (MREYKIYPYE…NELKKQARLF (69 aa)). Arg-631 carries the omega-N-methylarginine modification.

Directly interacts with F-actin and ABRA. As to expression, expressed predominantly in heart and brain.

Its subcellular location is the cytoplasm. May act as scaffold protein. May stimulate ABRA activity and ABRA-dependent SRF transcriptional activity. This is Actin-binding LIM protein 3 (ABLIM3) from Homo sapiens (Human).